A 626-amino-acid chain; its full sequence is ABC transporter G family member 8 (626 aa).

Positions 56–300 constitute an ABC transporter domain; the sequence is VNLDNKTENS…SLGYPCPNNT (245 aa). Position 90-97 (90-97) interacts with ATP; the sequence is GPSGSGKS. The 249-residue stretch at 373 to 621 folds into the ABC transmembrane type-2 domain; the sequence is GNALSRVITA…SLSYFALHFL (249 aa). 7 helical membrane-spanning segments follow: residues 376–396, 409–429, 447–467, 485–505, 515–535, 543–563, and 600–620; these read LSRV…FAGL, TLFF…TLFL, FPYF…VTLV, FFFA…FISS, LTFS…GFYV, AFGW…VVIN, and FGVL…ALHF.

It belongs to the ABC transporter superfamily. ABCG family. Eye pigment precursor importer (TC 3.A.1.204) subfamily.

Its subcellular location is the membrane. The sequence is that of ABC transporter G family member 8 (abcG8) from Dictyostelium discoideum (Social amoeba).